The primary structure comprises 206 residues: MSDPRQQLIALGAVFESAALVDKLARTGQISEAPLGCMLGSLLARNPASTLDVYGGDSLNLRDGFKALASALERKPGSLQREPLRYALAMLTLERQLDKRGDMLDLIGQRLDQVEQQVQHFGLVHENVIASFASIYQDTLSTFRQRIQVHGDMRHLQVSSNAARIRALLLAGIRSARLWRQLGGSRWQMVFSRRRLLNELYPLLRG.

Belongs to the HflD family.

Its subcellular location is the cytoplasm. The protein localises to the cell inner membrane. The polypeptide is High frequency lysogenization protein HflD homolog (Pseudomonas aeruginosa (strain LESB58)).